We begin with the raw amino-acid sequence, 452 residues long: Glucose-6-phosphate isomerase (452 aa).

E290 serves as the catalytic Proton donor. Active-site residues include H311 and K425.

This sequence belongs to the GPI family.

The protein localises to the cytoplasm. It catalyses the reaction alpha-D-glucose 6-phosphate = beta-D-fructose 6-phosphate. It functions in the pathway carbohydrate biosynthesis; gluconeogenesis. The protein operates within carbohydrate degradation; glycolysis; D-glyceraldehyde 3-phosphate and glycerone phosphate from D-glucose: step 2/4. Its function is as follows. Catalyzes the reversible isomerization of glucose-6-phosphate to fructose-6-phosphate. This is Glucose-6-phosphate isomerase from Limosilactobacillus reuteri (strain DSM 20016) (Lactobacillus reuteri).